A 433-amino-acid polypeptide reads, in one-letter code: Ribosomal protein uS12 methylthiotransferase RimO (433 aa).

The 117-residue stretch at 6-122 (QSIFLLSLGC…IISVLGGSYR (117 aa)) folds into the MTTase N-terminal domain. [4Fe-4S] cluster is bound by residues C15, C51, C85, C146, C150, and C153. Residues 132–362 (LTPPHYAWLK…MELQESIAAE (231 aa)) form the Radical SAM core domain. A TRAM domain is found at 365–432 (RELEGRVMKV…AYELHGRVND (68 aa)).

Belongs to the methylthiotransferase family. RimO subfamily. It depends on [4Fe-4S] cluster as a cofactor.

It is found in the cytoplasm. It carries out the reaction L-aspartate(89)-[ribosomal protein uS12]-hydrogen + (sulfur carrier)-SH + AH2 + 2 S-adenosyl-L-methionine = 3-methylsulfanyl-L-aspartate(89)-[ribosomal protein uS12]-hydrogen + (sulfur carrier)-H + 5'-deoxyadenosine + L-methionine + A + S-adenosyl-L-homocysteine + 2 H(+). Functionally, catalyzes the methylthiolation of an aspartic acid residue of ribosomal protein uS12. This is Ribosomal protein uS12 methylthiotransferase RimO from Prosthecochloris aestuarii (strain DSM 271 / SK 413).